The following is a 378-amino-acid chain: Poly(3-hydroxyalkanoate) polymerase subunit PhaC (378 aa).

Residues 84-356 (PVLIVYALVN…QSFPVGHIGM (273 aa)) enclose the AB hydrolase-1 domain.

Belongs to the PHA/PHB synthase family. Type III PhaC subfamily. As to quaternary structure, forms a heterodimer with PhaE, which may multimerize in the presence of 3-hydroxybutyryl-CoA. Both subunits are required for PHB synthesis in E.coli and in PHA-negative A.eutrophus.

It localises to the cytoplasm. The catalysed reaction is (3R)-3-hydroxybutanoyl-CoA + [(3R)-hydroxybutanoate](n) = [(3R)-hydroxybutanoate](n+1) + CoA. The protein operates within biopolymer metabolism; poly-(R)-3-hydroxybutanoate biosynthesis. Functionally, when expressed in E.coli with Synechocystis PhaE and C.necator PhaA and PhaB, confers the ability to synthesize up to 13% (w/w) poly(3-hydroxybutyrate) (PHB) depending on the carbon source; all 4 genes are necessary for PHB production. Cell-free in vitro coexpression with PhaE gives a heterodimer able to polymerize 3-hydroxybutyrate-CoA. The polypeptide is Poly(3-hydroxyalkanoate) polymerase subunit PhaC (Synechocystis sp. (strain ATCC 27184 / PCC 6803 / Kazusa)).